A 503-amino-acid chain; its full sequence is Probable DNA ligase (503 aa).

Aspartate 212 provides a ligand contact to ATP. Lysine 214 (N6-AMP-lysine intermediate) is an active-site residue. Residues arginine 219, arginine 234, glutamate 263, phenylalanine 296, arginine 368, and lysine 374 each coordinate ATP.

The protein belongs to the ATP-dependent DNA ligase family. Mg(2+) serves as cofactor.

The catalysed reaction is ATP + (deoxyribonucleotide)n-3'-hydroxyl + 5'-phospho-(deoxyribonucleotide)m = (deoxyribonucleotide)n+m + AMP + diphosphate.. DNA ligase that seals nicks in double-stranded DNA during DNA replication, DNA recombination and DNA repair. The protein is Probable DNA ligase of Kineococcus radiotolerans (strain ATCC BAA-149 / DSM 14245 / SRS30216).